We begin with the raw amino-acid sequence, 479 residues long: Ribulose bisphosphate carboxylase large chain (479 aa).

The propeptide occupies 1 to 2 (MS). Pro-3 is modified (N-acetylproline). Substrate contacts are provided by residues Thr-65, Asn-123, 173–177 (TIKPK), and 201–204 (KDDE). The Proton acceptor role is filled by Lys-175. The Mg(2+) site is built by Lys-201, Asp-203, and Glu-204. Lys-201 carries the post-translational modification N6-carboxylysine. Ser-208 is subject to Phosphoserine. The active-site Proton acceptor is His-294. Residues 294–295 (HR) and His-327 contribute to the substrate site. Thr-330 bears the Phosphothreonine mark. Substrate-binding positions include Lys-334 and 379–381 (SGG).

It belongs to the RuBisCO large chain family. Type I subfamily. As to quaternary structure, heterohexadecamer of 8 large chains and 8 small chains; disulfide-linked. The disulfide link is formed within the large subunit homodimers. Interacts with RBCX1 and RBCX1. An intermediate complex made of eight RbcL subunits interacts with the chaperone BSD2. The cofactor is Mg(2+). Post-translationally, the disulfide bond which can form in the large chain dimeric partners within the hexadecamer appears to be associated with oxidative stress and protein turnover.

The protein localises to the plastid. It is found in the chloroplast. It carries out the reaction 2 (2R)-3-phosphoglycerate + 2 H(+) = D-ribulose 1,5-bisphosphate + CO2 + H2O. It catalyses the reaction D-ribulose 1,5-bisphosphate + O2 = 2-phosphoglycolate + (2R)-3-phosphoglycerate + 2 H(+). Its function is as follows. RuBisCO catalyzes two reactions: the carboxylation of D-ribulose 1,5-bisphosphate, the primary event in carbon dioxide fixation, as well as the oxidative fragmentation of the pentose substrate in the photorespiration process. Both reactions occur simultaneously and in competition at the same active site. Binds to abscisic acid (ABA). This chain is Ribulose bisphosphate carboxylase large chain, found in Arabidopsis thaliana (Mouse-ear cress).